Consider the following 756-residue polypeptide: Rab11 family-interacting protein 3 (756 aa).

The segment covering 1-24 (MASAPPASPPGSEPPGPDPEPGGP) has biased composition (pro residues). A disordered region spans residues 1–204 (MASAPPASPP…SEPVGSQEDG (204 aa)). The interval 2 to 435 (ASAPPASPPG…RLSSKKVARY (434 aa)) is important for binding to DYNC1LI1. Positions 27 to 39 (PGAAQLAPGPAEL) are enriched in low complexity. Residue S52 is modified to Phosphoserine. Over residues 53 to 68 (PGLDEPAPGAAADGGA) the composition is skewed to low complexity. A compositionally biased stretch (pro residues) spans 84–94 (DPGPSAPPPRS). S102 carries the phosphoserine; by CDK1 modification. EF-hand domains follow at residues 202 to 237 (EDGP…YGAE) and 234 to 269 (YGAE…IRNG). Residues D215, D217, D219, D226, D247, S249, and D258 each coordinate Ca(2+). A phosphoserine mark is found at S281, S348, S488, S538, S647, and S648. The interval 484-588 (GEQHSRLRQE…LLDEIESLTL (105 aa)) is ARF-binding domain (ABD). A coiled-coil region spans residues 485-694 (EQHSRLRQEN…NGQIITLSIQ (210 aa)). Residues 645-664 (RSSSMGLQEYHSRARESELE) form a disordered region. The span at 654–664 (YHSRARESELE) shows a compositional bias: basic and acidic residues. In terms of domain architecture, FIP-RBD spans 694 to 756 (QGAKSLFSTA…ETNPSILEVK (63 aa)).

Homodimer. Interacts with RAB11A; the interaction is direct and is required for the recruitment to endosomes. Interacts with RAB11B. Forms a ternary complex with RAB11A and dynein intermediate chain DYNC1LI1; RAB11FIP3 links RAB11A to dynein and the interaction regulates endocytic trafficking. Interacts with dynein intermediate chain and dynactin (DCTN1); the interaction activates dynein processivity. Interacts with ARF6 and EXOC7; the interaction serves for recruitment and tethering of recycling endosomes-derived vesicles to the cleavage furrow/midbody. Interacts with RACGAP1/MgcRacGAP; the interaction occurs at late telophase and is required for recruitment and tethering of recycling endosomes-derived vesicles to the cleavage furrow/midbody. Forms a complex with RAB11A and Rabin8/RAB3IP, probably a heterohexamer with two of each protein subunit, where RAB3IP and RAB11FIP3 simultaneously bind to RAB11A; the complex promotes preciliary trafficking. Forms a complex containing RAB11A, ASAP1, RAB3IP, RAP11FIP3 and ARF4; the complex promotes preciliary trafficking; the complex binds to RHO in photoreceptor cells and promotes RHO ciliary transport. Interacts with RAB11FIP4. Interacts with RAB25. Post-translationally, phosphorylated at Ser-102 by CDK1 during metaphase, and dephosphorylated as cells enter telophase.

The protein localises to the endosome membrane. The protein resides in the recycling endosome membrane. Its subcellular location is the cytoplasm. It is found in the cytoskeleton. It localises to the microtubule organizing center. The protein localises to the centrosome. The protein resides in the cleavage furrow. Its subcellular location is the midbody. It is found in the golgi apparatus membrane. It localises to the golgi apparatus. The protein localises to the trans-Golgi network membrane. Its function is as follows. Downstream effector molecule for Rab11 GTPase which is involved in endocytic trafficking, cytokinesis and intracellular ciliogenesis by participating in membrane delivery. Recruited by Rab11 to endosomes where it links Rab11 to dynein motor complex. The functional Rab11-RAB11FIP3-dynein complex regulates the movement of peripheral sorting endosomes (SE) along microtubule tracks toward the microtubule organizing center/centrosome, generating the endocytic recycling compartment (ERC) during interphase of cell cycle. Facilitates the interaction between dynein and dynactin and activates dynein processivity. Binding with ASAP1 is needed to regulate the pericentrosomal localization of recycling endosomes. The Rab11-RAB11FIP3 complex is also implicated in the transport during telophase of vesicles derived from recycling endosomes to the cleavage furrow via centrosome-anchored microtubules, where the vesicles function to deliver membrane during late cytokinesis and abscission. The recruitment of Rab11-RAB11FIP3-containing endosomes to the cleavage furrow and tethering to the midbody is co-mediated by RAB11FIP3 interaction with ARF6-exocyst and RACGAP1-MKLP1 tethering complexes. Also involved in the Rab11-Rabin8-Rab8 ciliogenesis cascade by facilitating the orderly assembly of a ciliary targeting complex containing Rab11, ASAP1, Rabin8/RAB3IP, RAB11FIP3 and ARF4, which directs preciliary vesicle trafficking to mother centriole and ciliogenesis initiation. Also promotes the activity of Rab11 and ASAP1 in the ARF4-dependent Golgi-to-cilia transport of the sensory receptor rhodopsin. Competes with WDR44 for binding to Rab11, which controls intracellular ciliogenesis pathway. May play a role in breast cancer cell motility by regulating actin cytoskeleton. This Homo sapiens (Human) protein is Rab11 family-interacting protein 3.